A 164-amino-acid polypeptide reads, in one-letter code: Methyl-coenzyme M reductase I operon protein D (164 aa).

MCR is composed of three subunits: alpha, beta, and gamma. The function of proteins C and D is not known.

In Methanocaldococcus jannaschii (strain ATCC 43067 / DSM 2661 / JAL-1 / JCM 10045 / NBRC 100440) (Methanococcus jannaschii), this protein is Methyl-coenzyme M reductase I operon protein D (mcrD).